The following is a 318-amino-acid chain: Cobalamin biosynthesis protein CobD (318 aa).

The next 5 helical transmembrane spans lie at 56 to 76, 78 to 98, 153 to 173, 204 to 224, and 298 to 318; these read VLWLLVVGITWLVSWGFLWLM, EINPWLGWLAQVWMIYTLLAG, VDGVIAPLFFLMLGGAPLAMA, LANWLPARLSWVLLSAAAWLI, and MMASLLALLLFALTHLLLVGI.

The protein belongs to the CobD/CbiB family.

The protein resides in the cell membrane. Its pathway is cofactor biosynthesis; adenosylcobalamin biosynthesis. Functionally, converts cobyric acid to cobinamide by the addition of aminopropanol on the F carboxylic group. This Yersinia enterocolitica serotype O:8 / biotype 1B (strain NCTC 13174 / 8081) protein is Cobalamin biosynthesis protein CobD.